The primary structure comprises 436 residues: Testican-3 (436 aa).

The first 22 residues, 1 to 22 (MLKVSAVLCVCAAAWCSQSLAA), serve as a signal peptide directing secretion. 8 disulfides stabilise this stretch: cysteine 90–cysteine 101, cysteine 95–cysteine 111, cysteine 139–cysteine 169, cysteine 142–cysteine 162, cysteine 151–cysteine 183, cysteine 317–cysteine 341, cysteine 352–cysteine 359, and cysteine 361–cysteine 380. Residues 133-185 (GPILSTCKQCPVVYPSPVCGSDGHTYSFQCKLEYQACVLGKQISVKCEGHCPC) form the Kazal-like domain. The Thyroglobulin type-1 domain occupies 314 to 380 (DPPCQTELSN…GSRINGVADC (67 aa)). O-linked (Xyl...) (glycosaminoglycan) serine glycans are attached at residues serine 387 and serine 392. Residues 393 to 436 (GDFHEWTDDEDDEDDIMNDEDEIEDDDEDEGDDDDGGDDHDGYI) form a disordered region. Residues 399–430 (TDDEDDEDDIMNDEDEIEDDDEDEGDDDDGGD) show a composition bias toward acidic residues.

Contains chondroitin sulfate and heparan sulfate O-linked oligosaccharides. As to expression, expressed in brain.

Its subcellular location is the secreted. The protein resides in the extracellular space. The protein localises to the extracellular matrix. Its function is as follows. May participate in diverse steps of neurogenesis. Inhibits the processing of pro-matrix metalloproteinase 2 (MMP-2) by MT1-MMP and MT3-MMP. May interfere with tumor invasion. The sequence is that of Testican-3 (SPOCK3) from Pongo abelii (Sumatran orangutan).